Here is a 44-residue protein sequence, read N- to C-terminus: uncharacterized protein (44 aa).

Residues 19-39 form a helical membrane-spanning segment; that stretch reads AVGFVVSFGFFAFLFVMATVI.

The protein localises to the cell membrane. This is an uncharacterized protein from Bacillus subtilis (strain 168).